The sequence spans 85 residues: Hepcidin (85 aa).

Positions 1 to 24 (MKTFSVAVAVAVVLAFICLQESSA) are cleaved as a signal peptide. A propeptide spanning residues 25 to 64 (VPANEEQELEQQIYFADPEMPVESCKMPYYMRENRQGSPA) is cleaved from the precursor. Cystine bridges form between C66/C83, C69/C72, C70/C79, and C73/C82.

In terms of assembly, monomer. Expressed in all tissues tested, with highest levels of expression in kidney and lowest levels in liver. Intra-peritoneal injection of lipopolysaccharide results in increased expression in heart, spleen and stomach, but not in kidney or liver.

Its subcellular location is the secreted. Functionally, seems to act as a signaling molecule involved in the maintenance of iron homeostasis. Seems to be required in conjunction with HFE to regulate both intestinal iron absorption and iron storage in macrophages. In terms of biological role, has very strong antibacterial activity against the marine Gram-negative bacteria V.alginolyticus (MIC=24 uM), V.fluvialis, V.harveyis (MIC=12 uM) and V.parahaemolyticus (MIC=6 uM). Has antibacterial activity against the Gram-negative bacteria A.hydrophila (MIC=6 uM), E.coli (MIC=24 uM), and E.coli BL21(DE3)plysS (MIC=6 uM), and the Gram-positive bacteria B.cereus (MIC=24 uM), B.subtilis (MIC=6 uM), C.glutamicum (MIC=3 uM), M.luteus (MIC=3 uM), M.lysodeikticus, S.aureus (MIC=6 uM) and S.epidermis (MIC=12 uM). Possesses antifungal activity against A.niger (MIC=24 uM), F.graminearum (MIC24 uM) and F.solani (MIC=24 uM), but lacks antifungal activity against the yeasts P.pastoris GS115 and C.albicans. This is Hepcidin from Larimichthys crocea (Large yellow croaker).